A 189-amino-acid polypeptide reads, in one-letter code: Putative transcription factor ovo-like protein 3 (189 aa).

A disordered region spans residues 1–20; sequence MPRVFLVRSRRPQPPNWSHL. 4 consecutive C2H2-type zinc fingers follow at residues 69–91, 97–119, 125–148, and 164–186; these read LGCP…LKCH, HVCH…MRTH, FRCG…AKVH, and HVCE…RTLH.

It belongs to the krueppel C2H2-type zinc-finger protein family.

It is found in the nucleus. Its function is as follows. May act as a transcription regulator. This Mus musculus (Mouse) protein is Putative transcription factor ovo-like protein 3 (Ovol3).